Reading from the N-terminus, the 474-residue chain is Proline--tRNA ligase (474 aa).

It belongs to the class-II aminoacyl-tRNA synthetase family. ProS type 3 subfamily. As to quaternary structure, homodimer.

It is found in the cytoplasm. The enzyme catalyses tRNA(Pro) + L-proline + ATP = L-prolyl-tRNA(Pro) + AMP + diphosphate. In terms of biological role, catalyzes the attachment of proline to tRNA(Pro) in a two-step reaction: proline is first activated by ATP to form Pro-AMP and then transferred to the acceptor end of tRNA(Pro). This chain is Proline--tRNA ligase, found in Phytoplasma australiense.